The primary structure comprises 62 residues: Photosystem II reaction center protein Z (62 aa).

2 consecutive transmembrane segments (helical) span residues 8–28 (ALFA…VAFA) and 41–61 (FSGA…NSFI).

It belongs to the PsbZ family. In terms of assembly, PSII is composed of 1 copy each of membrane proteins PsbA, PsbB, PsbC, PsbD, PsbE, PsbF, PsbH, PsbI, PsbJ, PsbK, PsbL, PsbM, PsbT, PsbY, PsbZ, Psb30/Ycf12, at least 3 peripheral proteins of the oxygen-evolving complex and a large number of cofactors. It forms dimeric complexes.

It localises to the plastid. It is found in the chloroplast thylakoid membrane. Its function is as follows. May control the interaction of photosystem II (PSII) cores with the light-harvesting antenna, regulates electron flow through the 2 photosystem reaction centers. PSII is a light-driven water plastoquinone oxidoreductase, using light energy to abstract electrons from H(2)O, generating a proton gradient subsequently used for ATP formation. In Adiantum capillus-veneris (Maidenhair fern), this protein is Photosystem II reaction center protein Z.